Here is a 405-residue protein sequence, read N- to C-terminus: MQYSEIMVRYGELSTKGKNRMRFINQLKRNMKHVLSIYPEVSIRADRDRAHIYLNGANYVPVAESLKQIFGIQAFSPSYKVEKSVPALEKAVQAIMVELHHEGLTFKISSKRSDHQFELDSRELNQVLGSAVFAVLPDIKAQMNHPNVNLKVEIREEAAYLSYENIKGAGGLPVGTAGKGMLMLSGGIDSPVAGYLALKRGVNIEAVHFASPPYTSPGALKKAQDLTRKLTKFGGNIQFIEVPFTEIQEEIKAKAPEAYLMTLTRRFMMRIADRIREERSGLVIINGESLGQVASQTLESMQAINAVTTTPVIRPVVTMDKLEIIDIAEKIDTFAISIQPFEDCCTIFAPDRPKTNPKIKNVEQYEARLDIEGLVARAVAGINITEITPQEESQDEVDVLIEDLL.

Positions 60–165 (VPVAESLKQI…EEAAYLSYEN (106 aa)) constitute a THUMP domain. ATP-binding positions include 183 to 184 (ML), 208 to 209 (HF), Arg265, Gly287, and Gln296.

This sequence belongs to the ThiI family.

The protein resides in the cytoplasm. It catalyses the reaction [ThiI sulfur-carrier protein]-S-sulfanyl-L-cysteine + a uridine in tRNA + 2 reduced [2Fe-2S]-[ferredoxin] + ATP + H(+) = [ThiI sulfur-carrier protein]-L-cysteine + a 4-thiouridine in tRNA + 2 oxidized [2Fe-2S]-[ferredoxin] + AMP + diphosphate. The catalysed reaction is [ThiS sulfur-carrier protein]-C-terminal Gly-Gly-AMP + S-sulfanyl-L-cysteinyl-[cysteine desulfurase] + AH2 = [ThiS sulfur-carrier protein]-C-terminal-Gly-aminoethanethioate + L-cysteinyl-[cysteine desulfurase] + A + AMP + 2 H(+). It participates in cofactor biosynthesis; thiamine diphosphate biosynthesis. Catalyzes the ATP-dependent transfer of a sulfur to tRNA to produce 4-thiouridine in position 8 of tRNAs, which functions as a near-UV photosensor. Also catalyzes the transfer of sulfur to the sulfur carrier protein ThiS, forming ThiS-thiocarboxylate. This is a step in the synthesis of thiazole, in the thiamine biosynthesis pathway. The sulfur is donated as persulfide by IscS. The protein is Probable tRNA sulfurtransferase of Streptococcus mutans serotype c (strain ATCC 700610 / UA159).